The primary structure comprises 356 residues: Photosynthetic reaction center cytochrome c subunit (356 aa).

Positions methionine 1–glycine 20 are cleaved as a signal peptide. Cysteine 21 carries S-diacylglycerol cysteine lipidation. 16 residues coordinate heme: methionine 94, cysteine 107, cysteine 110, histidine 111, methionine 130, histidine 144, cysteine 152, cysteine 155, histidine 156, methionine 253, cysteine 264, cysteine 267, histidine 268, cysteine 325, cysteine 328, and histidine 329.

In terms of assembly, component of the photosynthetic reaction center composed of protein subunits L (PufL), M (PufM), H (PuhA) and cytochrome C (PufC). Post-translationally, binds 4 heme groups per subunit. In terms of processing, after the signal sequence is removed, the N-terminal cysteine is modified to form a diacylglyceride thioether, but the alpha-amino group is free and is not N-palmitoylated.

The protein resides in the cellular chromatophore membrane. Functionally, the reaction center of purple bacteria contains a tightly bound cytochrome molecule which re-reduces the photo oxidized primary electron donor. In Blastochloris viridis (Rhodopseudomonas viridis), this protein is Photosynthetic reaction center cytochrome c subunit.